The chain runs to 217 residues: Magnetosome protein MamA (217 aa).

6 TPR repeats span residues 12 to 44, 46 to 79, 80 to 113, 114 to 147, 148 to 181, and 182 to 215; these read VTLYAHYGLSVAKKLGMNMVDAFRAAFSVNDDI, QVYYRDKGISHAKAGRYSQAVMLLEQVYDADAFD, VDVALHLGIAYVKTGAVDRGTELLERSLADAPDN, VKVATVLGLTYVQVQKYDLAVPLLIKVAEANPIN, FNVRFRLGVALDNLGRFDEAIDSFKIALGLRPNE, and GKVHRAIAFSYEQMGRHEEALPHFKKANELDEGA. Positions 41 to 112 are N-terminal domain (NTD); sequence NDDIRQVYYR…LERSLADAPD (72 aa). A C-terminal domain (CTD) region spans residues 113-217; the sequence is NVKVATVLGL…ANELDEGASV (105 aa).

The protein belongs to the magnetosome MamA family. In terms of assembly, oligomerizes into high molecular weight complexes (at least 560 kDa). Forms round, 20 nm diameter complexes with a central cavity. Interacts with full-length Mms6. Probably binds MamC.

Its subcellular location is the magnetosome membrane. Probably forms a large homooligomer on which other magnetosome subunits assemble. Required for formation of functional magnetosomes from pre-existing vesicles, it has a dynamic location in the cell. This is Magnetosome protein MamA from Paramagnetospirillum magneticum (strain ATCC 700264 / AMB-1) (Magnetospirillum magneticum).